The primary structure comprises 145 residues: Large-conductance mechanosensitive channel (145 aa).

Helical transmembrane passes span 14-34, 38-58, and 81-101; these read VMDL…VKSL, LIMP…YFLP, and GSFL…FLMV.

Belongs to the MscL family. As to quaternary structure, homopentamer.

It is found in the cell inner membrane. Functionally, channel that opens in response to stretch forces in the membrane lipid bilayer. May participate in the regulation of osmotic pressure changes within the cell. The chain is Large-conductance mechanosensitive channel from Rhizobium leguminosarum bv. trifolii (strain WSM2304).